A 141-amino-acid chain; its full sequence is Hemoglobin subunit alpha (141 aa).

A Globin domain is found at 1–141; that stretch reads VLSSKDKANI…VSTVLTSKYR (141 aa). Position 3 is a phosphoserine (Ser-3). An N6-succinyllysine mark is found at Lys-7 and Lys-11. Lys-16 is subject to N6-acetyllysine; alternate. Lys-16 is modified (N6-succinyllysine; alternate). Tyr-24 is subject to Phosphotyrosine. Lys-40 is subject to N6-succinyllysine. At Ser-49 the chain carries Phosphoserine. Position 58 (His-58) interacts with O2. Heme b is bound at residue His-87. Ser-102 is modified (phosphoserine). At Thr-108 the chain carries Phosphothreonine. A Phosphoserine modification is found at Ser-124. Phosphothreonine is present on residues Thr-134 and Thr-137. At Ser-138 the chain carries Phosphoserine.

Belongs to the globin family. As to quaternary structure, heterotetramer of two alpha chains and two beta chains. Red blood cells.

Involved in oxygen transport from the lung to the various peripheral tissues. In terms of biological role, hemopressin acts as an antagonist peptide of the cannabinoid receptor CNR1. Hemopressin-binding efficiently blocks cannabinoid receptor CNR1 and subsequent signaling. This is Hemoglobin subunit alpha (HBA) from Lama glama (Llama).